A 243-amino-acid polypeptide reads, in one-letter code: UPF0246 protein gbs2036 (243 aa).

The protein belongs to the UPF0246 family.

The protein is UPF0246 protein gbs2036 of Streptococcus agalactiae serotype III (strain NEM316).